Reading from the N-terminus, the 388-residue chain is Alanine racemase (388 aa).

Catalysis depends on Lys-44, which acts as the Proton acceptor; specific for D-alanine. At Lys-44 the chain carries N6-(pyridoxal phosphate)lysine. Arg-142 contacts substrate. Tyr-273 functions as the Proton acceptor; specific for L-alanine in the catalytic mechanism. Met-321 contributes to the substrate binding site.

It belongs to the alanine racemase family. Requires pyridoxal 5'-phosphate as cofactor.

The catalysed reaction is L-alanine = D-alanine. It functions in the pathway amino-acid biosynthesis; D-alanine biosynthesis; D-alanine from L-alanine: step 1/1. Functionally, catalyzes the interconversion of L-alanine and D-alanine. May also act on other amino acids. This is Alanine racemase (alr) from Mycobacterium leprae (strain TN).